The following is a 1220-amino-acid chain: Plasma membrane calcium-transporting ATPase 1 (1220 aa).

Gly-2 bears the N-acetylglycine mark. Topologically, residues 2–105 are cytoplasmic; it reads GDMANNSVAY…KTFLQLVWEA (104 aa). A phosphoserine mark is found at Ser-8 and Ser-17. A helical transmembrane segment spans residues 106 to 126; the sequence is LQDVTLIILEIAAIVSLGLSF. Residues 127–154 lie on the Extracellular side of the membrane; sequence YQPPEGDNALCGEVSVGEEEGEGETGWI. Residues 155 to 175 traverse the membrane as a helical segment; sequence EGAAILLSVVCVVLVTAFNDW. The Cytoplasmic portion of the chain corresponds to 176 to 366; sequence SKEKQFRGLQ…KEKSVLQGKL (191 aa). The interval 297-356 is disordered; the sequence is EEEKKDEKKKEKKNKKQDGAIENRNKAKAQDGAAMEMQPLKSEEGGDGDEKDKKKANLPK. Basic and acidic residues-rich tracts occupy residues 312 to 325 and 337 to 356; these read KQDG…KAKA and KSEE…NLPK. Phosphoserine is present on Ser-338. Residues 367–386 traverse the membrane as a helical segment; that stretch reads TKLAVQIGKAGLLMSAITVI. Residues 387-418 are Extracellular-facing; it reads ILVLYFVIDTFWVQKRPWLAECTPIYIQYFVK. Residues 419 to 439 traverse the membrane as a helical segment; it reads FFIIGVTVLVVAVPEGLPLAV. The Cytoplasmic segment spans residues 440–855; the sequence is TISLAYSVKK…RNVYDSISKF (416 aa). Catalysis depends on Asp-475, which acts as the 4-aspartylphosphate intermediate. Asp-475, Thr-477, Asp-797, and Asp-801 together coordinate Mg(2+). Residues 856–876 form a helical membrane-spanning segment; it reads LQFQLTVNVVAVIVAFTGACI. At 877–882 the chain is on the extracellular side; that stretch reads TQDSPL. A helical membrane pass occupies residues 883 to 903; it reads KAVQMLWVNLIMDTLASLALA. Topologically, residues 904–927 are cytoplasmic; the sequence is TEPPTESLLLRKPYGRNKPLISRT. Residues 928-948 form a helical membrane-spanning segment; sequence MMKNILGHAFYQLVVVFTLLF. Residues 949–971 are Extracellular-facing; that stretch reads AGEKFFDIDSGRNAPLHAPPSEH. Residues 972-991 traverse the membrane as a helical segment; it reads YTIVFNTFVLMQLFNEINAR. The Cytoplasmic segment spans residues 992-1005; that stretch reads KIHGERNVFEGIFN. The helical transmembrane segment at 1006-1027 threads the bilayer; that stretch reads NAIFCTIVLGTFVVQIIIVQFG. The Extracellular portion of the chain corresponds to 1028–1039; sequence GKPFSCSELSIE. The helical transmembrane segment at 1040–1060 threads the bilayer; that stretch reads QWLWSIFLGMGTLLWGQLIST. Residues 1061-1220 are Cytoplasmic-facing; sequence IPTSRLKFLK…SPLHSLETSL (160 aa). The tract at residues 1100 to 1117 is calmodulin-binding subdomain A; it reads LRRGQILWFRGLNRIQTQ. At Thr-1116 the chain carries Phosphothreonine; by PKC. The interval 1118–1127 is calmodulin-binding subdomain B; that stretch reads IRVVNAFRSS. Residues 1118-1220 form a required for basolateral membrane targeting region; that stretch reads IRVVNAFRSS…SPLHSLETSL (103 aa). Ser-1140 and Ser-1155 each carry phosphoserine. The segment at 1160-1220 is disordered; that stretch reads PLIDDTDAED…SPLHSLETSL (61 aa). Thr-1165 carries the phosphothreonine modification. 2 positions are modified to phosphoserine: Ser-1178 and Ser-1182. A compositionally biased stretch (polar residues) spans 1200–1220; sequence MNKSATSSSPGSPLHSLETSL.

The protein belongs to the cation transport ATPase (P-type) (TC 3.A.3) family. Type IIB subfamily. In terms of assembly, monomer. Dimer. Oligomer. Calmodulin binding. Interacts with PDZD11. Interacts with SLC35G1 and STIM1. Interacts with YWHAE; interacts with the monomeric and dimeric forms of the YWHAE but prefer the monomer form; this interaction inhibits calcium-transporting ATPase activity. Interacts with NPTN; this interaction stabilizes ATP2B1 and increases ATPase activity; this interaction controls T cell calcium homeostasis following T cell activation. Interacts with EPB41; regulates small intestinal calcium absorption through regulation of membrane expression of ATP2B1.

It is found in the cell membrane. The protein resides in the basolateral cell membrane. Its subcellular location is the synapse. The protein localises to the presynaptic cell membrane. It localises to the cytoplasmic vesicle. It is found in the secretory vesicle. The protein resides in the synaptic vesicle membrane. The catalysed reaction is Ca(2+)(in) + ATP + H2O = Ca(2+)(out) + ADP + phosphate + H(+). Catalyzes the hydrolysis of ATP coupled with the transport of calcium from the cytoplasm to the extracellular space thereby maintaining intracellular calcium homeostasis. Plays a role in blood pressure regulation through regulation of intracellular calcium concentration and nitric oxide production leading to regulation of vascular smooth muscle cells vasoconstriction. Positively regulates bone mineralization through absorption of calcium from the intestine. Plays dual roles in osteoclast differentiation and survival by regulating RANKL-induced calcium oscillations in preosteoclasts and mediating calcium extrusion in mature osteoclasts. Regulates insulin sensitivity through calcium/calmodulin signaling pathway by regulating AKT1 activation and NOS3 activation in endothelial cells. May play a role in synaptic transmission by modulating calcium and proton dynamics at the synaptic vesicles. The protein is Plasma membrane calcium-transporting ATPase 1 of Sus scrofa (Pig).